We begin with the raw amino-acid sequence, 652 residues long: DNA ligase (652 aa).

Residues 29–33 (DSDYD), 78–79 (SL), and glutamate 107 each bind NAD(+). The active-site N6-AMP-lysine intermediate is lysine 109. Residues arginine 130, glutamate 164, lysine 278, and lysine 302 each contribute to the NAD(+) site. Zn(2+)-binding residues include cysteine 395, cysteine 398, cysteine 413, and cysteine 418. A BRCT domain is found at 577 to 652 (NSDAALFGLT…IEDEDWLRQL (76 aa)).

Belongs to the NAD-dependent DNA ligase family. LigA subfamily. It depends on Mg(2+) as a cofactor. Requires Mn(2+) as cofactor.

It carries out the reaction NAD(+) + (deoxyribonucleotide)n-3'-hydroxyl + 5'-phospho-(deoxyribonucleotide)m = (deoxyribonucleotide)n+m + AMP + beta-nicotinamide D-nucleotide.. DNA ligase that catalyzes the formation of phosphodiester linkages between 5'-phosphoryl and 3'-hydroxyl groups in double-stranded DNA using NAD as a coenzyme and as the energy source for the reaction. It is essential for DNA replication and repair of damaged DNA. The chain is DNA ligase from Streptococcus pyogenes serotype M49 (strain NZ131).